The sequence spans 37 residues: Large ribosomal subunit protein bL36c (37 aa).

This sequence belongs to the bacterial ribosomal protein bL36 family.

It localises to the plastid. It is found in the chloroplast. The protein is Large ribosomal subunit protein bL36c of Chara vulgaris (Common stonewort).